A 389-amino-acid polypeptide reads, in one-letter code: Na(+)/H(+) antiporter NhaA 1 (389 aa).

A run of 11 helical transmembrane segments spans residues 12 to 32 (VLNE…ALLV), 62 to 82 (FLLW…GLEL), 97 to 117 (IVLP…LFAL), 128 to 148 (GWAI…MMCG), 157 to 177 (IFLL…IAIF), 184 to 204 (IVAF…NILG), 220 to 240 (ISVL…AFFI), 260 to 280 (FWLA…VNLS), 282 to 302 (IDIG…LFVG), 331 to 351 (LYGV…IDGL), and 365 to 385 (LAIL…LKFF).

This sequence belongs to the NhaA Na(+)/H(+) (TC 2.A.33) antiporter family.

Its subcellular location is the cell inner membrane. It catalyses the reaction Na(+)(in) + 2 H(+)(out) = Na(+)(out) + 2 H(+)(in). In terms of biological role, na(+)/H(+) antiporter that extrudes sodium in exchange for external protons. This Campylobacter jejuni subsp. jejuni serotype O:6 (strain 81116 / NCTC 11828) protein is Na(+)/H(+) antiporter NhaA 1.